The primary structure comprises 365 residues: tRNA N6-adenosine threonylcarbamoyltransferase (365 aa).

Fe cation contacts are provided by H119 and H123. Residues 141–145, D174, G187, and N289 contribute to the substrate site; that span reads LVSGG. D317 is a binding site for Fe cation. The segment at 341-365 is disordered; the sequence is SARPRWPLDKTSPALIGSGKKGAKA.

The protein belongs to the KAE1 / TsaD family. Requires Fe(2+) as cofactor.

The protein resides in the cytoplasm. The catalysed reaction is L-threonylcarbamoyladenylate + adenosine(37) in tRNA = N(6)-L-threonylcarbamoyladenosine(37) in tRNA + AMP + H(+). In terms of biological role, required for the formation of a threonylcarbamoyl group on adenosine at position 37 (t(6)A37) in tRNAs that read codons beginning with adenine. Is involved in the transfer of the threonylcarbamoyl moiety of threonylcarbamoyl-AMP (TC-AMP) to the N6 group of A37, together with TsaE and TsaB. TsaD likely plays a direct catalytic role in this reaction. This Ruegeria sp. (strain TM1040) (Silicibacter sp.) protein is tRNA N6-adenosine threonylcarbamoyltransferase.